Here is a 419-residue protein sequence, read N- to C-terminus: UPF0242 protein TC_0906 (419 aa).

The protein belongs to the UPF0242 family.

This chain is UPF0242 protein TC_0906, found in Chlamydia muridarum (strain MoPn / Nigg).